The following is a 533-amino-acid chain: Aspartic proteinase sxa1 (533 aa).

The first 23 residues, 1–23, serve as a signal peptide directing secretion; sequence MKASFFVFAISALQALQASVASA. Residues 76–434 form the Peptidase A1 domain; the sequence is YFANLTLGSN…DWDAQKIGLA (359 aa). Asn79 is a glycosylation site (N-linked (GlcNAc...) asparagine). Residue Asp94 is part of the active site. Asn106, Asn138, Asn153, Asn166, Asn271, Asn278, Asn299, and Asn319 each carry an N-linked (GlcNAc...) asparagine glycan. Asp325 is an active-site residue. N-linked (GlcNAc...) asparagine glycosylation is present at Asn439.

This sequence belongs to the peptidase A1 family.

Involved in degradation or processing of the mating pheromones. Its loss may cause a persistent response to the pheromones. It may cleave the mating pheromone M-factor. May be involved in processing of zymogens that are required for zygote formation. The polypeptide is Aspartic proteinase sxa1 (sxa1) (Schizosaccharomyces pombe (strain 972 / ATCC 24843) (Fission yeast)).